The chain runs to 470 residues: MLQLYNTLTNQKEKFEPLNPGKVTMYVCGPTVYNYIHIGNARSAVAFDTIRRYLEYRGFEVNYVSNFTDVDDKIIKASQEMNLSVKEITEKFINAFYEDTSALNVKKATLNPRVMDNMDDIIKFIEVLVQKGYAYESAGDVYYKTRKFKDYGKLSGQLIDDLEQGASSRVDDIDQDKKQDPLDFALWKKVKQGEISWNSPWGQGRPGWHIECSVMSTKYLGDTIDIHAGGQDLEFPHHENEIAQSEAKTGKKFARYWLHNGFVTIGEEDQKMSKSLGNFVTVHDLLKKVNPQVIRFFMSTTQYRRPIRYSSANLNEAKVNLNKLQTAYENLSYRLKDSVEGNDKEVEVNFANLEKDFVKVMDDDFNVQNGISVVYEMAKQLNVYSEKEKVYTDTINNLINTYKKVVEIFGISFSEEKELLDDTIEQLIQERNEARKNKNFKRSDEIRDLLKEQGIILEDTAQGTRWKRND.

Residue Cys-28 participates in Zn(2+) binding. The 'HIGH' region motif lies at 30–40 (PTVYNYIHIGN). The Zn(2+) site is built by Cys-212, His-237, and Glu-241. Positions 271–275 (KMSKS) match the 'KMSKS' region motif. Lys-274 serves as a coordination point for ATP.

It belongs to the class-I aminoacyl-tRNA synthetase family. Monomer. Zn(2+) is required as a cofactor.

The protein resides in the cytoplasm. The enzyme catalyses tRNA(Cys) + L-cysteine + ATP = L-cysteinyl-tRNA(Cys) + AMP + diphosphate. The sequence is that of Cysteine--tRNA ligase from Ligilactobacillus salivarius (strain UCC118) (Lactobacillus salivarius).